Reading from the N-terminus, the 324-residue chain is Lactonase drp35 (324 aa).

The Ca(2+) site is built by Glu47, Ser109, Gly111, Asp129, Thr132, Tyr134, Asp137, Asn184, Asp235, and Ser236. Asp235 acts as the Proton donor in catalysis.

This sequence belongs to the SMP-30/CGR1 family. Requires Ca(2+) as cofactor.

It is found in the cytoplasm. Functionally, exhibits lactonase activity. Acts in cells with perturbed membrane integrity and is possibly related to the membrane homeostasis. The protein is Lactonase drp35 (drp35) of Staphylococcus aureus (strain bovine RF122 / ET3-1).